Consider the following 410-residue polypeptide: UDP-N-acetylglucosamine--dolichyl-phosphate N-acetylglucosaminephosphotransferase (410 aa).

Residues 1-10 (MWAFPELPLP) lie on the Lumenal side of the membrane. The chain crosses the membrane as a helical span at residues 11-40 (LPLLVNLIGSLLGFVATVTLIPAFRSHFIA). Residues 41-60 (ARLCGQDLNKLSQQQIPESQ) are Cytoplasmic-facing. UDP-N-acetyl-alpha-D-glucosamine is bound by residues 46–48 (QDL) and Glu-58. A helical transmembrane segment spans residues 61 to 80 (GVISGAVFLIILFCFIPFPF). Topologically, residues 81 to 93 (LNCFVEEQCKAFP) are lumenal. The chain crosses the membrane as a helical span at residues 94-120 (HHEFVALIGALLAICCMIFLGFADDVL). Over 121 to 123 (NLR) the chain is Cytoplasmic. The helical transmembrane segment at 124–145 (WRHKLLLPTAASLPLLMVYFTN) threads the bilayer. Residue Lys-127 coordinates dolichyl phosphate. At 146–168 (FGNTTIVVPKPFRWILGLHLDLG) the chain is on the lumenal side. The N-linked (GlcNAc...) asparagine glycan is linked to Asn-148. Residues 169–188 (ILYYVYMGLLAVFCTNAINI) form a helical membrane-spanning segment. A dolichyl phosphate-binding site is contributed by 180–188 (VFCTNAINI). Asn-187 is a Mg(2+) binding site. Over 189–194 (LAGING) the chain is Cytoplasmic. Asn-193 is a UDP-N-acetyl-alpha-D-glucosamine binding site. A helical transmembrane segment spans residues 195–215 (LEAGQSLVISASIIVFNLVEL). The Lumenal segment spans residues 216–220 (EGDYR). A helical membrane pass occupies residues 221-244 (DDHIFSLYFMIPFFFTTLGLLYHN). At 245-252 (WYPSRVFV) the chain is on the cytoplasmic side. The chain crosses the membrane as a helical span at residues 253–271 (GDTFCYFAGMTFAVVGILG). Position 254 (Asp-254) interacts with Mg(2+). Topologically, residues 272-273 (HF) are lumenal. Residues 274–295 (SKTMLLFFMPQVFNFLYSLPQL) traverse the membrane as a helical segment. The Cytoplasmic segment spans residues 296–377 (FHIIPCPRHR…LLLKVFGPIH (82 aa)). 303–305 (RHR) contributes to the UDP-N-acetyl-alpha-D-glucosamine binding site. The helical transmembrane segment at 378-402 (ERNLTLLLLLLQVLSSAATFSIRYQ) threads the bilayer. The Lumenal portion of the chain corresponds to 403-410 (LVRLFYDV).

The protein belongs to the glycosyltransferase 4 family. Homodimer. Mg(2+) serves as cofactor.

The protein resides in the endoplasmic reticulum membrane. It carries out the reaction a di-trans,poly-cis-dolichyl phosphate + UDP-N-acetyl-alpha-D-glucosamine = an N-acetyl-alpha-D-glucosaminyl-diphospho-di-trans,poly-cis-dolichol + UMP. It participates in protein modification; protein glycosylation. With respect to regulation, inhibited by natural nucleoside antibiotic tunicamycin, which acts as a structural analog and competitor of UDP-GlcNAc. Functionally, UDP-N-acetylglucosamine--dolichyl-phosphate N-acetylglucosaminephosphotransferase that operates in the biosynthetic pathway of dolichol-linked oligosaccharides, the glycan precursors employed in protein asparagine (N)-glycosylation. The assembly of dolichol-linked oligosaccharides begins on the cytosolic side of the endoplasmic reticulum membrane and finishes in its lumen. The sequential addition of sugars to dolichol pyrophosphate produces dolichol-linked oligosaccharides containing fourteen sugars, including two GlcNAcs, nine mannoses and three glucoses. Once assembled, the oligosaccharide is transferred from the lipid to nascent proteins by oligosaccharyltransferases. Catalyzes the initial step of dolichol-linked oligosaccharide biosynthesis, transfering GlcNAc-1-P from cytosolic UDP-GlcNAc onto the carrier lipid dolichyl phosphate (P-dolichol), yielding GlcNAc-P-P-dolichol embedded in the cytoplasmic leaflet of the endoplasmic reticulum membrane. The chain is UDP-N-acetylglucosamine--dolichyl-phosphate N-acetylglucosaminephosphotransferase from Mus musculus (Mouse).